The sequence spans 339 residues: Proto-oncogene serine/threonine-protein kinase mos (339 aa).

Residues 61–335 enclose the Protein kinase domain; the sequence is VCLLHRLGSG…LLQKDLKAFR (275 aa). ATP is bound by residues 67 to 75 and Lys88; that span reads LGSGGFGSV. The active-site Proton acceptor is the Asp196.

This sequence belongs to the protein kinase superfamily. Ser/Thr protein kinase family. As to quaternary structure, interacts with MAP2K1/MEK1. In terms of tissue distribution, expressed mainly in gonadal tissues, and cardiac and skeletal muscles.

It localises to the cytoplasm. It carries out the reaction L-seryl-[protein] + ATP = O-phospho-L-seryl-[protein] + ADP + H(+). It catalyses the reaction L-threonyl-[protein] + ATP = O-phospho-L-threonyl-[protein] + ADP + H(+). In terms of biological role, serine/threonine kinase involved in the regulation of MAPK signaling. Is an activator of the ERK1/2 signaling cascade playing an essential role in the stimulation of oocyte maturation. This chain is Proto-oncogene serine/threonine-protein kinase mos, found in Rattus norvegicus (Rat).